Here is a 166-residue protein sequence, read N- to C-terminus: Phospholipase A2 inhibitor clone 10 (166 aa).

The signal sequence occupies residues Met-1–Gly-19. The region spanning Leu-46 to Glu-161 is the C-type lectin domain. 2 disulfide bridges follow: Cys-83/Cys-160 and Cys-138/Cys-152. The N-linked (GlcNAc...) asparagine glycan is linked to Asn-122.

This sequence belongs to the alpha-type phospholipase A2 inhibitor family. Homotrimer; non-covalently linked. Expressed by the liver.

It localises to the secreted. Its function is as follows. This phospholipase A2 inhibitor binds directly phospholipase A2 in the presence or absence of calcium. The protein is Phospholipase A2 inhibitor clone 10 of Bothrops moojeni (Lance-headed viper).